The chain runs to 111 residues: Succinate dehydrogenase assembly factor 1B, mitochondrial (111 aa).

It belongs to the complex I LYR family. SDHAF1 subfamily. Interacts with the iron-sulfur protein subunit within the SDH catalytic dimer.

The protein localises to the mitochondrion matrix. Functionally, plays an essential role in the assembly of succinate dehydrogenase (SDH), an enzyme complex (also referred to as respiratory complex II) that is a component of both the tricarboxylic acid (TCA) cycle and the mitochondrial electron transport chain, and which couples the oxidation of succinate to fumarate with the reduction of ubiquinone (coenzyme Q) to ubiquinol. Promotes maturation of the iron-sulfur protein subunit of the SDH catalytic dimer, protecting it from the deleterious effects of oxidants. May act together with SDHAF3. The chain is Succinate dehydrogenase assembly factor 1B, mitochondrial from Dictyostelium discoideum (Social amoeba).